The chain runs to 578 residues: Malonate--CoA ligase ACSF3, mitochondrial (578 aa).

The N-terminal 19 residues, 1–19 (MRVGAFLGRSLFSCSHVRG), are a transit peptide targeting the mitochondrion. 205–213 (TSGTTGRPK) contributes to the ATP binding site. The interval 394–413 (QNPRKEGTSYTTHAQGDSTG) is disordered. Residues aspartate 459, arginine 473, and lysine 565 each coordinate ATP.

Belongs to the ATP-dependent AMP-binding enzyme family.

The protein localises to the mitochondrion. The enzyme catalyses tetracosanoate + ATP + CoA = tetracosanoyl-CoA + AMP + diphosphate. It carries out the reaction malonate + ATP + CoA = malonyl-CoA + AMP + diphosphate. Catalyzes the initial reaction in intramitochondrial fatty acid synthesis, by activating malonate and methylmalonate, but not acetate, into their respective CoA thioester. May have some preference toward very-long-chain substrates. This Xenopus laevis (African clawed frog) protein is Malonate--CoA ligase ACSF3, mitochondrial.